The chain runs to 282 residues: Probable endonuclease 4 (282 aa).

Residues His69, His109, Glu144, Asp178, His181, His215, Asp228, His230, and Glu260 each contribute to the Zn(2+) site.

It belongs to the AP endonuclease 2 family. Zn(2+) is required as a cofactor.

The catalysed reaction is Endonucleolytic cleavage to 5'-phosphooligonucleotide end-products.. Its function is as follows. Endonuclease IV plays a role in DNA repair. It cleaves phosphodiester bonds at apurinic or apyrimidinic (AP) sites, generating a 3'-hydroxyl group and a 5'-terminal sugar phosphate. In Thermosipho africanus (strain TCF52B), this protein is Probable endonuclease 4.